The following is a 103-amino-acid chain: Large ribosomal subunit protein bL21 (103 aa).

Belongs to the bacterial ribosomal protein bL21 family. In terms of assembly, part of the 50S ribosomal subunit. Contacts protein L20.

Its function is as follows. This protein binds to 23S rRNA in the presence of protein L20. The sequence is that of Large ribosomal subunit protein bL21 from Vibrio atlanticus (strain LGP32) (Vibrio splendidus (strain Mel32)).